The primary structure comprises 395 residues: Ketol-acid reductoisomerase, mitochondrial (395 aa).

A mitochondrion-targeting transit peptide spans 1 to 47 (MLRTQAARLICNSRVITAKRTFALATRAAAYSRPAARFVKPMITTRG). A KARI N-terminal Rossmann domain is found at 57-246 (VETVYERADW…AIGSGYVYQT (190 aa)). Residues 84–93 (GYGSQGYGQG), 108–113 (RKDGAS), and 146–150 (SDAAQ) each bind NADP(+). His-171 is an active-site residue. The KARI C-terminal knotted domain occupies 247-394 (TFEREVNSDL…KEVRKLRPEN (148 aa)). Residues Asp-255, Glu-259, Glu-291, and Glu-295 each contribute to the Mg(2+) site. Ser-317 lines the substrate pocket. Ser-355 bears the Phosphoserine mark. Residues 363–395 (DYREKLEKELDTIRNMEIWKVGKEVRKLRPENQ) are hydrophilic.

It belongs to the ketol-acid reductoisomerase family. Mg(2+) is required as a cofactor.

The protein resides in the mitochondrion. The enzyme catalyses (2R)-2,3-dihydroxy-3-methylbutanoate + NADP(+) = (2S)-2-acetolactate + NADPH + H(+). It carries out the reaction (2R,3R)-2,3-dihydroxy-3-methylpentanoate + NADP(+) = (S)-2-ethyl-2-hydroxy-3-oxobutanoate + NADPH + H(+). It functions in the pathway amino-acid biosynthesis; L-isoleucine biosynthesis; L-isoleucine from 2-oxobutanoate: step 2/4. It participates in amino-acid biosynthesis; L-valine biosynthesis; L-valine from pyruvate: step 2/4. Functionally, involved in the biosynthesis of branched-chain amino acids (BCAA). Catalyzes the second common step in the parallel biosynthesis of isoleucine and valine. Converts alpha-aceto-alpha-hydroxybutyrate (AHB) to alpha,beta-dihydroxy-beta-methylvalerate (DHMV) and alpha-acetolactate (AL) to alpha,beta-dihydroxy-isovalerate (DHV) in isoleucine and valine biosynthesis, respectively. This chain is Ketol-acid reductoisomerase, mitochondrial, found in Saccharomyces cerevisiae (strain ATCC 204508 / S288c) (Baker's yeast).